The following is a 98-amino-acid chain: Gas vesicle protein A (98 aa).

It belongs to the gas vesicle GvpA family. The gas vesicle shell is 2 nm thick and consists of a single layer of this protein. It forms helical ribs nearly perpendicular to the long axis of the vesicle.

The protein resides in the gas vesicle shell. In terms of biological role, gas vesicles are hollow, gas filled proteinaceous nanostructures found in some microorganisms. During planktonic growth they allow positioning of the organism at a favorable depth for light or nutrient acquisition. GvpA forms the protein shell. The protein is Gas vesicle protein A of Koribacter versatilis (strain Ellin345).